An 802-amino-acid polypeptide reads, in one-letter code: Phenylalanine--tRNA ligase beta subunit (802 aa).

A tRNA-binding domain is found at 39 to 154 (AEGLSKLVVG…EDAVPGDSIF (116 aa)). The region spanning 407–482 (TEPVQVSTSL…RIYGYEKLPT (76 aa)) is the B5 domain. Asp-460, Asp-466, Glu-469, and Glu-470 together coordinate Mg(2+). Positions 709–802 (TKFPAVSRDI…LTEKVEAEVR (94 aa)) constitute an FDX-ACB domain.

It belongs to the phenylalanyl-tRNA synthetase beta subunit family. Type 1 subfamily. In terms of assembly, tetramer of two alpha and two beta subunits. It depends on Mg(2+) as a cofactor.

It is found in the cytoplasm. It catalyses the reaction tRNA(Phe) + L-phenylalanine + ATP = L-phenylalanyl-tRNA(Phe) + AMP + diphosphate + H(+). This Streptococcus thermophilus (strain CNRZ 1066) protein is Phenylalanine--tRNA ligase beta subunit.